A 1465-amino-acid polypeptide reads, in one-letter code: Gag-Pol polyprotein (1465 aa).

Gly2 carries N-myristoyl glycine; by host lipidation. The Nuclear export signal motif lies at 16-22; that stretch reads FEHIRLR. Residues 26–32 carry the Nuclear localization signal motif; the sequence is KKKYQIK. The tract at residues 116 to 144 is disordered; it reads NAERNTTETSSGQKKNDKGVTVPPGGSQN. CCHC-type zinc fingers lie at residues 402 to 419 and 423 to 440; these read VKCY…QCPE and MRCL…DCRG. A Peptidase A2 domain is found at 532–603; the sequence is IRALLDTGAD…TPINIIGRNI (72 aa). Asp537 (for protease activity; shared with dimeric partner) is an active-site residue. The 191-residue stretch at 659-849 folds into the Reverse transcriptase domain; it reads EGKISKIGGE…PPYEWMGYKL (191 aa). 3 residues coordinate Mg(2+): Asp725, Asp800, and Asp801. An RT 'primer grip' region spans residues 842-850; sequence YEWMGYKLW. The Tryptophan repeat motif motif lies at 1012-1028; sequence WEQWWADYWQVSWIPDW. The RNase H type-1 domain maps to 1048 to 1171; that stretch reads IPKEDVYYVD…IDKLVSQGMR (124 aa). Asp1057, Glu1092, Asp1112, and Asp1163 together coordinate Mg(2+). The Integrase-type zinc finger occupies 1177–1218; the sequence is EKIEEAQEEHERYHNNWRNLADTYGLPQIVAKEIVAMCPKCQ. Residues His1186, His1190, Cys1214, and Cys1217 each contribute to the Zn(2+) site. Positions 1228–1378 constitute an Integrase catalytic domain; that stretch reads VDASPGVWQM…TPAERLINMI (151 aa). Positions 1238 and 1290 each coordinate Mg(2+). A DNA-binding region (integrase-type) is located at residues 1397 to 1444; it reads FRVYYREGRDPVWKGPGQLIWKGEGAVVIKGGVELKEYPRRKAKIIKD.

Homotrimer. Interacts with gp41 (via C-terminus). In terms of assembly, homodimer. The active site consists of two apposed aspartic acid residues. As to quaternary structure, heterodimer of p66 RT and p51 RT (RT p66/p51). Heterodimerization of RT is essential for DNA polymerase activity. Despite the sequence identities, p66 RT and p51 RT have distinct folding. Homotetramer; may further associate as a homohexadecamer. Mg(2+) is required as a cofactor. Specific enzymatic cleavages by the viral protease yield mature proteins. The protease is released by autocatalytic cleavage. The polyprotein is cleaved during and after budding, this process is termed maturation. Proteolytic cleavage of p66 RT removes the RNase H domain to yield the p51 RT subunit. In terms of processing, capsid protein p24 is phosphorylated.

The protein localises to the virion. The protein resides in the host nucleus. It is found in the host cytoplasm. Its subcellular location is the host cell membrane. It carries out the reaction Specific for a P1 residue that is hydrophobic, and P1' variable, but often Pro.. It catalyses the reaction Endohydrolysis of RNA in RNA/DNA hybrids. Three different cleavage modes: 1. sequence-specific internal cleavage of RNA. Human immunodeficiency virus type 1 and Moloney murine leukemia virus enzymes prefer to cleave the RNA strand one nucleotide away from the RNA-DNA junction. 2. RNA 5'-end directed cleavage 13-19 nucleotides from the RNA end. 3. DNA 3'-end directed cleavage 15-20 nucleotides away from the primer terminus.. The catalysed reaction is 3'-end directed exonucleolytic cleavage of viral RNA-DNA hybrid.. The enzyme catalyses DNA(n) + a 2'-deoxyribonucleoside 5'-triphosphate = DNA(n+1) + diphosphate. Its activity is regulated as follows. The viral protease is inhibited by many synthetic protease inhibitors (PIs), such as amprenavir, atazanavir, indinavir, loprinavir, nelfinavir, ritonavir and saquinavir. RT can be inhibited either by nucleoside RT inhibitors (NRTIs) or by non nucleoside RT inhibitors (NNRTIs). NRTIs act as chain terminators, whereas NNRTIs inhibit DNA polymerization by binding a small hydrophobic pocket near the RT active site and inducing an allosteric change in this region. Classical NRTIs are abacavir, adefovir (PMEA), didanosine (ddI), lamivudine (3TC), stavudine (d4T), tenofovir (PMPA), zalcitabine (ddC), and zidovudine (AZT). Classical NNRTIs are atevirdine (BHAP U-87201E), delavirdine, efavirenz (DMP-266), emivirine (I-EBU), and nevirapine (BI-RG-587). The tritherapies used as a basic effective treatment of AIDS associate two NRTIs and one NNRTI. Use of protease inhibitors in tritherapy regimens permit more ambitious therapeutic strategies. In terms of biological role, gag-Pol polyprotein and Gag polyprotein may regulate their own translation, by the binding genomic RNA in the 5'-UTR. At low concentration, Gag-Pol and Gag would promote translation, whereas at high concentration, the polyproteins encapsidate genomic RNA and then shut off translation. Its function is as follows. Matrix protein p17 has two main functions: in infected cell, it targets Gag and Gag-pol polyproteins to the plasma membrane via a multipartite membrane-binding signal, that includes its myristointegration complex. The myristoylation signal and the NLS exert conflicting influences its subcellular localization. The key regulation of these motifs might be phosphorylation of a portion of MA molecules on the C-terminal tyrosine at the time of virus maturation, by virion-associated cellular tyrosine kinase. Implicated in the release from host cell mediated by Vpu. Functionally, capsid protein p24 forms the conical core that encapsulates the genomic RNA-nucleocapsid complex in the virion. The core is constituted by capsid protein hexamer subunits. The core is disassembled soon after virion entry. Interaction with host PPIA/CYPA protects the virus from restriction by host TRIM5-alpha and from an unknown antiviral activity in host cells. This capsid restriction by TRIM5 is one of the factors which restricts SIV to the simian species. Nucleocapsid protein p7 encapsulates and protects viral dimeric unspliced (genomic) RNA. Binds these RNAs through its zinc fingers. Facilitates rearangement of nucleic acid secondary structure during retrotranscription of genomic RNA. This capability is referred to as nucleic acid chaperone activity. In terms of biological role, the aspartyl protease mediates proteolytic cleavages of Gag and Gag-Pol polyproteins during or shortly after the release of the virion from the plasma membrane. Cleavages take place as an ordered, step-wise cascade to yield mature proteins. This process is called maturation. Displays maximal activity during the budding process just prior to particle release from the cell. Also cleaves Nef and Vif, probably concomitantly with viral structural proteins on maturation of virus particles. Hydrolyzes host EIF4GI and PABP1 in order to shut off the capped cellular mRNA translation. The resulting inhibition of cellular protein synthesis serves to ensure maximal viral gene expression and to evade host immune response. Its function is as follows. Reverse transcriptase/ribonuclease H (RT) is a multifunctional enzyme that converts the viral dimeric RNA genome into dsDNA in the cytoplasm, shortly after virus entry into the cell. This enzyme displays a DNA polymerase activity that can copy either DNA or RNA templates, and a ribonuclease H (RNase H) activity that cleaves the RNA strand of RNA-DNA heteroduplexes in a partially processive 3' to 5' endonucleasic mode. Conversion of viral genomic RNA into dsDNA requires many steps. A tRNA binds to the primer-binding site (PBS) situated at the 5'-end of the viral RNA. RT uses the 3' end of the tRNA primer to perform a short round of RNA-dependent minus-strand DNA synthesis. The reading proceeds through the U5 region and ends after the repeated (R) region which is present at both ends of viral RNA. The portion of the RNA-DNA heteroduplex is digested by the RNase H, resulting in a ssDNA product attached to the tRNA primer. This ssDNA/tRNA hybridizes with the identical R region situated at the 3' end of viral RNA. This template exchange, known as minus-strand DNA strong stop transfer, can be either intra- or intermolecular. RT uses the 3' end of this newly synthesized short ssDNA to perform the RNA-dependent minus-strand DNA synthesis of the whole template. RNase H digests the RNA template except for two polypurine tracts (PPTs) situated at the 5'-end and near the center of the genome. It is not clear if both polymerase and RNase H activities are simultaneous. RNase H can probably proceed both in a polymerase-dependent (RNA cut into small fragments by the same RT performing DNA synthesis) and a polymerase-independent mode (cleavage of remaining RNA fragments by free RTs). Secondly, RT performs DNA-directed plus-strand DNA synthesis using the PPTs that have not been removed by RNase H as primers. PPTs and tRNA primers are then removed by RNase H. The 3' and 5' ssDNA PBS regions hybridize to form a circular dsDNA intermediate. Strand displacement synthesis by RT to the PBS and PPT ends produces a blunt ended, linear dsDNA copy of the viral genome that includes long terminal repeats (LTRs) at both ends. Functionally, integrase catalyzes viral DNA integration into the host chromosome, by performing a series of DNA cutting and joining reactions. This enzyme activity takes place after virion entry into a cell and reverse transcription of the RNA genome in dsDNA. The first step in the integration process is 3' processing. This step requires a complex comprising the viral genome, matrix protein, Vpr and integrase. This complex is called the pre-integration complex (PIC). The integrase protein removes 2 nucleotides from each 3' end of the viral DNA, leaving recessed CA OH's at the 3' ends. In the second step, the PIC enters cell nucleus. This process is mediated through integrase and Vpr proteins, and allows the virus to infect a non dividing cell. This ability to enter the nucleus is specific of lentiviruses, other retroviruses cannot and rely on cell division to access cell chromosomes. In the third step, termed strand transfer, the integrase protein joins the previously processed 3' ends to the 5' ends of strands of target cellular DNA at the site of integration. The 5'-ends are produced by integrase-catalyzed staggered cuts, 5 bp apart. A Y-shaped, gapped, recombination intermediate results, with the 5'-ends of the viral DNA strands and the 3' ends of target DNA strands remaining unjoined, flanking a gap of 5 bp. The last step is viral DNA integration into host chromosome. This involves host DNA repair synthesis in which the 5 bp gaps between the unjoined strands are filled in and then ligated. Since this process occurs at both cuts flanking the SIV genome, a 5 bp duplication of host DNA is produced at the ends of SIV integration. Alternatively, Integrase may catalyze the excision of viral DNA just after strand transfer, this is termed disintegration. The polypeptide is Gag-Pol polyprotein (gag-pol) (Cercopithecidae (Old World monkeys)).